Consider the following 1135-residue polypeptide: LRR receptor-like serine/threonine-protein kinase RGI2 (1135 aa).

The N-terminal stretch at 1–35 is a signal peptide; it reads MSLQMPIPRKKALTVSHFSITLSLFLAFFISSTSA. At 36-723 the chain is on the extracellular side; sequence STNEVSALIS…QRGVHSHRLR (688 aa). Cys69 and Cys76 are disulfide-bonded. 2 N-linked (GlcNAc...) asparagine glycosylation sites follow: Asn101 and Asn117. LRR repeat units lie at residues 105 to 129, 130 to 153, 154 to 177, and 179 to 203; these read FTSL…IGDC, SELI…LGKL, KNLQ…LGDC, and SLKN…KIST. 4 short sequence motifs (small peptide recognition) span residues 186 to 187, 208 to 211, 231 to 236, and Tyr259; these read FD, RAGG, and VLGLAA. 19 LRR repeats span residues 226–250, 251–274, 276–298, 299–323, 325–345, 346–370, 372–395, 397–418, 419–442, 444–466, 467–490, 491–514, 516–538, 539–562, 564–586, 587–610, 612–634, 635–658, and 659–683; these read CRNL…LGQL, SKLQ…LGNC, ELIN…LGKL, QNLE…GFMK, LNAI…SFGN, LSNL…LSNC, KLVQ…GLLK, LNIF…LAGC, QNLQ…LFQL, NLTK…IGNC, TSLV…IGFL, QNLS…ISNC, QLQM…LSSL, TKLQ…LGHL, SLNR…LGHC, TNLQ…LFDI, DLDI…RISA, LNRL…LSGL, and ENLV…VFRQ. Residue Asn273 is glycosylated (N-linked (GlcNAc...) asparagine). The short motif at 281–283 is the Small peptide recognition element; it reads FLY. Residues 329-332 carry the Small peptide recognition motif; it reads DLSM. An N-linked (GlcNAc...) asparagine glycan is attached at Asn345. Residues 351–353 carry the Small peptide recognition motif; the sequence is ELM. Residues Asn358 and Asn369 are each glycosylated (N-linked (GlcNAc...) asparagine). 2 short sequence motifs (small peptide recognition) span residues 399-403 and 425-428; these read IFLGW and DLSQ. Asn444 is a glycosylation site (N-linked (GlcNAc...) asparagine). The short motif at 447-451 is the Small peptide recognition element; sequence KLLLI. Asn465 is a glycosylation site (N-linked (GlcNAc...) asparagine). The Small peptide recognition signature appears at 471-473; sequence RLR. Asn492, Asn502, Asn521, and Asn524 each carry an N-linked (GlcNAc...) asparagine glycan. Residues Asn598 and Asn618 are each glycosylated (N-linked (GlcNAc...) asparagine). Asn665 and Asn707 each carry an N-linked (GlcNAc...) asparagine glycan. Residues 724–744 form a helical membrane-spanning segment; it reads IAIGLLISVTAVLAVLGVLAV. At 745–1135 the chain is on the cytoplasmic side; that stretch reads IRAKQMIRDD…ATSNVRPNLK (391 aa). Residue Thr777 is modified to Phosphothreonine. Positions 785–1066 constitute a Protein kinase domain; sequence LVEGNVIGKG…KDVAAMLSEI (282 aa). Residues 791–799 and Lys813 each bind ATP; that span reads IGKGCSGIV. Residues Tyr868 and Tyr907 each carry the phosphotyrosine modification. Asp920 serves as the catalytic Proton acceptor. A phosphotyrosine mark is found at Tyr963 and Tyr970. The tract at residues 1077–1135 is disordered; it reads DGCSGSCNNGRERGKDDSTSSVMQQTAKYLRSSSTSFSASSLLYSSSSSATSNVRPNLK. Over residues 1108 to 1128 the composition is skewed to low complexity; sequence SSSTSFSASSLLYSSSSSATS.

It belongs to the protein kinase superfamily. Ser/Thr protein kinase family. Binds to RGF peptides such as RGF1, GLV5/CLEL1/RGF2, GLV7/CLEL3/RGF3, GLV3/RGF4, GLV10/CLEL7/RGF5 and RGF10/CLELN; these interactions trigger the formation of heterodimers with SERK1. Interacts with UBP13. In terms of processing, phosphorylated and ubiquitinated upon interaction with RGF1, thus leading to activation a subsequent degradation. Stabilized by UBP12 and UBP13-mediated deubiquitination. Post-translationally, autophosphorylated. Specific to root meristems, especially in lateral root meristems (LRM).

It is found in the membrane. It carries out the reaction L-seryl-[protein] + ATP = O-phospho-L-seryl-[protein] + ADP + H(+). It catalyses the reaction L-threonyl-[protein] + ATP = O-phospho-L-threonyl-[protein] + ADP + H(+). Together with RGI1, RGI3, RGI4 and RGI5, acts as a receptor of RGF peptides (e.g. RGF1, GLV5/CLEL1/RGF2, GLV7/CLEL3/RGF3, GLV3/RGF4, GLV10/CLEL7/RGF5 and RGF10/CLELN), peptide hormones which maintain the postembryonic root stem cell niche by regulating the expression levels and patterns of the transcription factor PLETHORA (PLT, e.g. PLT1 and PLT2). Links RGF peptides signal with their downstream components. This Arabidopsis thaliana (Mouse-ear cress) protein is LRR receptor-like serine/threonine-protein kinase RGI2.